We begin with the raw amino-acid sequence, 141 residues long: Keratin-associated protein 19-2 (141 aa).

The interval 5–135 (SGYSGGLGYG…CRRSSCCGGY (131 aa)) is 48 X 2 AA repeats of G-[YCGS].

This sequence belongs to the KRTAP type 19 family. Interacts with hair keratins. In terms of tissue distribution, strong expression in narrowly defined pattern restricted to the lower and middle cortical regions of the hair shaft in both developing and cycling hair. During hair follicle regression (catagen), expression levels decrease until expression is no longer detectable in follicles at resting stage (telogen).

Its function is as follows. In the hair cortex, hair keratin intermediate filaments are embedded in an interfilamentous matrix, consisting of hair keratin-associated proteins (KRTAP), which are essential for the formation of a rigid and resistant hair shaft through their extensive disulfide bond cross-linking with abundant cysteine residues of hair keratins. The matrix proteins include the high-sulfur and high-glycine-tyrosine keratins. This is Keratin-associated protein 19-2 (Krtap19-2) from Mus musculus (Mouse).